The primary structure comprises 263 residues: Phosphatidylglycerol--prolipoprotein diacylglyceryl transferase (263 aa).

The next 4 membrane-spanning stretches (helical) occupy residues 15 to 35, 52 to 72, 83 to 103, and 112 to 132; these read ISIHWYAICIVSGLLLAVYLA, FILLAFPIAIVGARLYYVIFQ, IFAIWNGGIAIYGGLIAGAAV, and AIAVLDFLDIAAPGVMIAQSI. Residue Arg-134 coordinates a 1,2-diacyl-sn-glycero-3-phospho-(1'-sn-glycerol). 3 helical membrane passes run 170 to 190, 200 to 220, and 230 to 250; these read VPTFLYESLWNLVGFSIILGL, GDVTSFYLIWYGLGRFVIEGM, and LRVSQWVSISIIILGAVLLYF.

This sequence belongs to the Lgt family.

It localises to the cell membrane. It carries out the reaction L-cysteinyl-[prolipoprotein] + a 1,2-diacyl-sn-glycero-3-phospho-(1'-sn-glycerol) = an S-1,2-diacyl-sn-glyceryl-L-cysteinyl-[prolipoprotein] + sn-glycerol 1-phosphate + H(+). It participates in protein modification; lipoprotein biosynthesis (diacylglyceryl transfer). Functionally, catalyzes the transfer of the diacylglyceryl group from phosphatidylglycerol to the sulfhydryl group of the N-terminal cysteine of a prolipoprotein, the first step in the formation of mature lipoproteins. The polypeptide is Phosphatidylglycerol--prolipoprotein diacylglyceryl transferase (Streptococcus thermophilus (strain ATCC BAA-250 / LMG 18311)).